The following is a 1383-amino-acid chain: MYAAGSRGHSPAFLQPQNGNGHRSPGYVPGKVVPLRPAPPPKNHASAKLTSRSQDAPATFAFSPEEQRTPSESRKRKRHKNTFICFAITSFSFFVALAVILGISSKYAPDENCPDQNPRLRNWDPGQDSAKHIVIKEGDLFRLTSDATVDSIVIQDGGLLVFGDDKDGSKNITLRTRYILIQDGGALHIGAEKCRYRSKATITLYGKSDERESMPIFGKKFIGVEAGGTLELHGAQRTSWTMLARTLHSSGLPFGSYAFEKDFSRGLNVRVIDQDTARVLENEKFDTHEYHNESRRLQEFLRAQEPGRIVAIAVGDSAVKSLLQGTIQMIQDRLGSKLIQGLGYRQAWALVGVIDGGSSSCNESVRNYENHSTGGKALAQGEFYTLDGQKFSVTAYSEWSQGISLSGFRVDIADGVKLHLLDDVSTWEAGDRIVVASTDYSMYQAEELTLLRCPECSRSQVKVKEIPQYLHVGEIIDGIDMRAEVGLLTRNIVIQGEMEDSCYAENHCQFFDYDTFGGHVMIEKNFTSVHLSYVELKHMGQQHMGRYPVHFHLCGDVDSKGGYSQPASVDGLSVHHSFSRCITVHGTSGLLIKDTIGFDTLGHCFFLEDGVEQRNILYHNLGLLTKPGTLLPTDRNSSMCTVMRDGVFGNYVPVPTTDCMAVSTFWIAHPNNHLINNAAAGSQDAGIWYLFHKEPTGESSGLQLLEKPELTPLGIFYNNRVHSNFKAGLFVDKGVKTTNASASDPREYLCLDNSARFRPHQDADPEKPRVAAIIDRLIAFKNNDNGAWVRGGDIIVQNSAFADNGKGLTFASDGSFPSDEGSSQEVTESLFVGESRNYGFQGGQNKYMGTGGIDQKPRTLPRNRTFPIRGFQIYDGPIHLTKSTFKKYVPTPDRYSSAIGFLMKNSWQTTPRNNVSLVKFGPQVSLNVFFGKPGPWFEDCELDGDKNSIFHDIDGSVTGYKDTYVGRMDNYLIRHPNCVNVTKWNAVICSGTYAQVYVQTWNTPNLSMIITRDEYPSHPMVLRGINQRAISPQYQPVVMLEKGYTIHWNGPAPRTTFLYLVNFNKDDWIRVGLCYPANTSFQVTVGFLQRQNGSLSRIEDYEPARSMEELQKKPSERKFYFDSGTGLLFLYLRAHSHRDGHSYCSSQGCERVKIQAATDSKDISNCMAKAYPQYYKKPSAVKRMPAMLTGLCQGCGTHQMVFTSDPHKSYLPVRFQSPGKAEIQRGDPSIISVNGTDFTFRSAGALLLIVDACSVPFRVKEKRMFLSADVSHMEEYFKASIPPRSIVLLSTRGEIKQLNISDSLAVLGLAKPAHLYSKGSVVFLGFSGNFAPSWTKLFTSPDEQGLGVLEQFLPLQMEEYGCSRTGSVHRRDLDLLQQALKVL.

The disordered stretch occupies residues 1–76; the sequence is MYAAGSRGHS…QRTPSESRKR (76 aa). The Cytoplasmic segment spans residues 1–82; that stretch reads MYAAGSRGHS…SRKRKRHKNT (82 aa). A phosphoserine mark is found at S10, S53, and S63. A helical; Signal-anchor for type II membrane protein transmembrane segment spans residues 83-103; it reads FICFAITSFSFFVALAVILGI. Residues 104-1383 lie on the Extracellular side of the membrane; that stretch reads SSKYAPDENC…DLLQQALKVL (1280 aa). The 125-residue stretch at 121–245 folds into the G8 domain; sequence RNWDPGQDSA…QRTSWTMLAR (125 aa). Residues 255–412 form the GG-type lectin 1 domain; it reads GSYAFEKDFS…ISLSGFRVDI (158 aa). N292 carries N-linked (GlcNAc...) asparagine glycosylation. PbH1 repeat units lie at residues 669–691, 711–733, and 791–812; these read HPNNHLINNAAAGSQDAGIWYLF, TPLGIFYNNRVHSNFKAGLFVDK, and GGDIIVQNSAFADNGKGLTFAS. Residues N914 and N1234 are each glycosylated (N-linked (GlcNAc...) asparagine). Residues 1208-1366 form the GG-type lectin 2 domain; the sequence is KSYLPVRFQS…MEEYGCSRTG (159 aa).

The protein belongs to the CEMIP family. Ca(2+) serves as cofactor. Widely expressed. Strongly expressed in endothelial cells in the subcapsular sinus of lymph nodes and in the liver sinusoid, two primary sites implicated in systemic hyaluronan turnover.

Its subcellular location is the cell membrane. The catalysed reaction is Random hydrolysis of (1-&gt;4)-linkages between N-acetyl-beta-D-glucosamine and D-glucuronate residues in hyaluronate.. In terms of biological role, cell surface hyaluronidase that mediates the initial cleavage of extracellular high-molecular-weight hyaluronan into intermediate-size hyaluronan of approximately 5 kDa fragments. Very specific to hyaluronan; not able to cleave chondroitin sulfate or dermatan sulfate. Has an essential function in systemic hyaluronan catabolism and turnover and regulates cell adhesion and migration via hyaluronan degradation at focal adhesion sites. Acts as a regulator of angiogenesis and heart morphogenesis by mediating degradation of extracellular hyaluronan, thereby regulating VEGF signaling. This is Cell surface hyaluronidase from Mus musculus (Mouse).